Here is a 256-residue protein sequence, read N- to C-terminus: Astacin-like metalloprotease toxin 2 (256 aa).

The signal sequence occupies residues 1–24 (MIPDVGFLVLLTGALFICIKAAPA). Residues 25-52 (TTDVDPTFEGRIVMEGDILIREEQLTER) constitute a propeptide that is removed on maturation. Residues 53–250 (NAIALENMRW…KKINTLYNCP (198 aa)) enclose the Peptidase M12A domain. 2 disulfides stabilise this stretch: cysteine 94-cysteine 249 and cysteine 117-cysteine 136. Histidine 144 contacts Zn(2+). The active site involves glutamate 145. Positions 148 and 154 each coordinate Zn(2+).

In terms of assembly, monomer. Zn(2+) serves as cofactor. In terms of tissue distribution, expressed by the venom gland.

Its subcellular location is the secreted. With respect to regulation, inhibited by 1,10-phenanthroline. Functionally, zinc metalloprotease. Provoques deadhesion of endothelial cells from cell cultures, and also degradation of fibronectin, fibrinogen and gelatin in vitro. Its role in the venom is not fully understood but it might act as a spreading factor that facilitates diffusion of other venom toxins. Alternatively, it might be involved in the proteolytic processing of other venom toxins or it might play a role in extra-oral digestion of prey. The protein is Astacin-like metalloprotease toxin 2 of Loxosceles intermedia (Brown spider).